Consider the following 94-residue polypeptide: ESAT-6-like protein EsxO (94 aa).

Belongs to the WXG100 family. ESAT-6 subfamily. In terms of assembly, forms a complex with EsxP.

Its subcellular location is the secreted. This chain is ESAT-6-like protein EsxO, found in Mycobacterium tuberculosis (strain CDC 1551 / Oshkosh).